Reading from the N-terminus, the 215-residue chain is 3-dehydroquinate dehydratase (215 aa).

3-dehydroquinate is bound by residues 27–29 and R54; that span reads ELR. H112 acts as the Proton donor/acceptor in catalysis. Catalysis depends on K139, which acts as the Schiff-base intermediate with substrate. 3-dehydroquinate is bound by residues R176 and Q198.

This sequence belongs to the type-I 3-dehydroquinase family. Homodimer.

It carries out the reaction 3-dehydroquinate = 3-dehydroshikimate + H2O. The protein operates within metabolic intermediate biosynthesis; chorismate biosynthesis; chorismate from D-erythrose 4-phosphate and phosphoenolpyruvate: step 3/7. Involved in the third step of the chorismate pathway, which leads to the biosynthesis of aromatic amino acids. Catalyzes the cis-dehydration of 3-dehydroquinate (DHQ) and introduces the first double bond of the aromatic ring to yield 3-dehydroshikimate. This Pyrococcus abyssi (strain GE5 / Orsay) protein is 3-dehydroquinate dehydratase.